The sequence spans 372 residues: Rab9 effector protein with kelch motifs (372 aa).

Kelch repeat units follow at residues 49 to 95 (KVFI…FLPS), 100 to 146 (SIWV…TSSA), 151 to 203 (HLYV…AAGT), 204 to 250 (KLFI…AAVA), and 254 to 303 (HVYV…VIPW). Positions 321–342 (LQDEKGDAAEKPETRSGGSREE) are disordered. Over residues 322–342 (QDEKGDAAEKPETRSGGSREE) the composition is skewed to basic and acidic residues. The Kelch 6 repeat unit spans residues 349-372 (LCFVFGGMNTEGEIYDDCLVTVVD).

As to quaternary structure, interacts with PIKFYVE; the interaction recruits RABEPK to the endosomal membrane. Interacts with RAB9 in its GTP-bound conformation. In terms of processing, phosphorylated on Ser residues by PIKFYVE.

Its subcellular location is the cytoplasm. It is found in the endosome membrane. Its function is as follows. Rab9 effector required for endosome to trans-Golgi network (TGN) transport. The protein is Rab9 effector protein with kelch motifs (Rabepk) of Rattus norvegicus (Rat).